A 277-amino-acid polypeptide reads, in one-letter code: tRNA pseudouridine synthase A (277 aa).

Catalysis depends on D51, which acts as the Nucleophile. Y109 provides a ligand contact to substrate.

Belongs to the tRNA pseudouridine synthase TruA family. Homodimer.

The catalysed reaction is uridine(38/39/40) in tRNA = pseudouridine(38/39/40) in tRNA. Its function is as follows. Formation of pseudouridine at positions 38, 39 and 40 in the anticodon stem and loop of transfer RNAs. The polypeptide is tRNA pseudouridine synthase A (Nitrosomonas eutropha (strain DSM 101675 / C91 / Nm57)).